The chain runs to 201 residues: Peptidyl-prolyl cis-trans isomerase CYP19-4 (201 aa).

The first 23 residues, 1 to 23, serve as a signal peptide directing secretion; sequence MAKASFILLGTLFLFGAIASIQA. Residues 35–198 form the PPIase cyclophilin-type domain; it reads YFDVEIDGKS…SKVVIADSGE (164 aa).

This sequence belongs to the cyclophilin-type PPIase family. In terms of assembly, interacts with EMB30/GNOM. As to expression, ubiquitous, mostly in aerial organs (at protein level).

It is found in the cytoplasm. The protein localises to the membrane. The protein resides in the endoplasmic reticulum. Its subcellular location is the secreted. It carries out the reaction [protein]-peptidylproline (omega=180) = [protein]-peptidylproline (omega=0). With respect to regulation, binds cyclosporin A (CsA). CsA mediates some of its effects via an inhibitory action on PPIase. PPIases accelerate the folding of proteins. It catalyzes the cis-trans isomerization of proline imidic peptide bonds in oligopeptides. May be involved during embryogenesis and organ development by regulating the folding of EMB30/GNOM, and thus, by modulating its activity. The protein is Peptidyl-prolyl cis-trans isomerase CYP19-4 (CYP19-4) of Arabidopsis thaliana (Mouse-ear cress).